Reading from the N-terminus, the 202-residue chain is Casparian strip membrane protein 1 (202 aa).

A compositionally biased stretch (polar residues) spans 1-13 (MEKSESSTIQIAE). A disordered region spans residues 1 to 30 (MEKSESSTIQIAESSKDRKGKAPLLPPPVH). Over 1–42 (MEKSESSTIQIAESSKDRKGKAPLLPPPVHHERAAGYKRGVA) the chain is Cytoplasmic. Residues 43–63 (IFDLILRISAATAALAATIVM) form a helical membrane-spanning segment. The Extracellular portion of the chain corresponds to 64–90 (GTTEQTLPFFTQFFQFRASYDDLPTFT). A helical membrane pass occupies residues 91–111 (FFVIAMAIVTGYLILSVPFSI). At 112–130 (VCIARPVVAAPRILLILCD) the chain is on the cytoplasmic side. A helical membrane pass occupies residues 131 to 151 (TLTVTLATSAAGASAAIVYLA). Residues 152 to 177 (HNGXSDANWLAICQQFNDFCQRVSGA) are Extracellular-facing. Residues 178–198 (VVAAFVSAVLLIFLVVLSAIV) traverse the membrane as a helical segment. Topologically, residues 199–202 (LKKH) are cytoplasmic.

It belongs to the Casparian strip membrane proteins (CASP) family. Homodimer and heterodimers.

It localises to the cell membrane. Its function is as follows. Regulates membrane-cell wall junctions and localized cell wall deposition. Required for establishment of the Casparian strip membrane domain (CSD) and the subsequent formation of Casparian strips, a cell wall modification of the root endodermis that determines an apoplastic barrier between the intraorganismal apoplasm and the extraorganismal apoplasm and prevents lateral diffusion. In Triphysaria pusilla (Dwarf owl's-clover), this protein is Casparian strip membrane protein 1.